The primary structure comprises 60 residues: Large ribosomal subunit protein uL30 (60 aa).

It belongs to the universal ribosomal protein uL30 family. Part of the 50S ribosomal subunit.

This is Large ribosomal subunit protein uL30 from Moorella thermoacetica (strain ATCC 39073 / JCM 9320).